Here is a 1073-residue protein sequence, read N- to C-terminus: 3-hydroxy-3-methylglutaryl-coenzyme A reductase 1 (1073 aa).

Transmembrane regions (helical) follow at residues 23-43 (FMVV…DDYI), 181-201 (FDIL…IKVF), 211-231 (FWLA…ALLV), 298-318 (HLVV…LTGL), 326-346 (SLIL…ILGL), 399-419 (IAYF…FWLG), 459-479 (GTVV…MVQL), and 498-518 (IISK…VYFL). Residues 182 to 346 (DILLIFVAYL…YTFFSAILGL (165 aa)) enclose the SSD domain. Low complexity predominate over residues 542 to 565 (SSVTATTTTTATGTTSSGAATSKT). A disordered region spans residues 542-589 (SSVTATTTTTATGTTSSGAATSKTIGNNKGLKSVQEIPDNEDESSDEE). A compositionally biased stretch (acidic residues) spans 579 to 589 (PDNEDESSDEE). The active-site Charge relay system is the Glu714. A CoA-binding site is contributed by 720 to 726 (STMRGCK). Residues 781–783 (SRF) and 808–816 (DAMGMNMIS) contribute to the NADP(+) site. The Charge relay system role is filled by Lys848. Residue 877 to 879 (VLK) coordinates CoA. The active-site Charge relay system is the Asp924. The chain crosses the membrane as a helical span at residues 997–1017 (IVASAVLAAELSLCSALAAGH). A CoA-binding site is contributed by 1021-1022 (SH). His1022 acts as the Proton donor in catalysis. Residues 1025–1056 (HNRSKAPAAGATTTTTPAITDSKASNGSIASN) form a disordered region. Residue 1026–1027 (NR) participates in NADP(+) binding. Over residues 1030–1042 (APAAGATTTTTPA) the composition is skewed to low complexity. Polar residues predominate over residues 1046–1055 (SKASNGSIAS).

The protein belongs to the HMG-CoA reductase family.

Its subcellular location is the endoplasmic reticulum membrane. The catalysed reaction is (R)-mevalonate + 2 NADP(+) + CoA = (3S)-3-hydroxy-3-methylglutaryl-CoA + 2 NADPH + 2 H(+). It participates in metabolic intermediate biosynthesis; (R)-mevalonate biosynthesis; (R)-mevalonate from acetyl-CoA: step 3/3. In terms of biological role, HMG-CoA reductase; part of the first module of ergosterol biosynthesis pathway that includes the early steps of the pathway, conserved across all eukaryotes, and which results in the formation of mevalonate from acetyl-coenzyme A (acetyl-CoA). HMG1 catalyzes the reduction of hydroxymethylglutaryl-CoA (HMG-CoA) to mevalonate. The first module starts with the action of the cytosolic acetyl-CoA acetyltransferase ERG10 that catalyzes the formation of acetoacetyl-CoA. The hydroxymethylglutaryl-CoA synthase ERG13 then condenses acetyl-CoA with acetoacetyl-CoA to form HMG-CoA. The 3-hydroxy-3-methylglutaryl-coenzyme A (HMG-CoA) reductase HMG1 finally reduces HMG-CoA to produce mevalonate. The sequence is that of 3-hydroxy-3-methylglutaryl-coenzyme A reductase 1 from Candida albicans (strain SC5314 / ATCC MYA-2876) (Yeast).